The chain runs to 459 residues: UDP-N-acetylmuramoylalanine--D-glutamate ligase (459 aa).

119–125 (GTNGKTT) contacts ATP.

Belongs to the MurCDEF family.

The protein localises to the cytoplasm. It carries out the reaction UDP-N-acetyl-alpha-D-muramoyl-L-alanine + D-glutamate + ATP = UDP-N-acetyl-alpha-D-muramoyl-L-alanyl-D-glutamate + ADP + phosphate + H(+). The protein operates within cell wall biogenesis; peptidoglycan biosynthesis. In terms of biological role, cell wall formation. Catalyzes the addition of glutamate to the nucleotide precursor UDP-N-acetylmuramoyl-L-alanine (UMA). The chain is UDP-N-acetylmuramoylalanine--D-glutamate ligase from Lacticaseibacillus casei (strain BL23) (Lactobacillus casei).